A 204-amino-acid chain; its full sequence is MKFSSVTAITLATVATVATAKKGEHDFTTTLTLSSDGSLTTTTSTHTTHKYGKFNKTSKSKTPNHTGTHKYGKFNKTSKSKTPNHTGTHKYGKFNKTSKSKTPNHTGTHKYGKFNKTSKSKTPNHTGTHKYGKFNKTSKSKTPNHTGTHKYGKFNKTKHDTTTYGPGEKARKNNAAPGPSNFNSIKLFGVTAGSAAVAGALLLL.

Positions 1–20 (MKFSSVTAITLATVATVATA) are cleaved as a signal peptide. The segment covering 35 to 46 (SDGSLTTTTSTH) has biased composition (low complexity). Residues 35 to 179 (SDGSLTTTTS…ARKNNAAPGP (145 aa)) are disordered. Residues 47–59 (TTHKYGKFNKTSK) show a composition bias toward basic residues. 11 N-linked (GlcNAc...) asparagine glycosylation sites follow: Asn-55, Asn-64, Asn-75, Asn-84, Asn-95, Asn-104, Asn-115, Asn-124, Asn-135, Asn-144, and Asn-155. The span at 67-79 (GTHKYGKFNKTSK) shows a compositional bias: basic residues. Over residues 87 to 99 (GTHKYGKFNKTSK) the composition is skewed to basic residues. Basic residues predominate over residues 107 to 119 (GTHKYGKFNKTSK). The segment covering 127–139 (GTHKYGKFNKTSK) has biased composition (basic residues). Residues 147–156 (GTHKYGKFNK) are compositionally biased toward basic residues. Residue Asn-174 is the site of GPI-anchor amidated asparagine attachment. Positions 175-204 (AAPGPSNFNSIKLFGVTAGSAAVAGALLLL) are cleaved as a propeptide — removed in mature form.

This sequence belongs to the PGA14 family. In terms of processing, the GPI-anchor is attached to the protein in the endoplasmic reticulum and serves to target the protein to the cell surface. There, the glucosamine-inositol phospholipid moiety is cleaved off and the GPI-modified mannoprotein is covalently attached via its lipidless GPI glycan remnant to the 1,6-beta-glucan of the outer cell wall layer.

It is found in the secreted. Its subcellular location is the cell wall. It localises to the membrane. In terms of biological role, hydrophilin which is essential to overcome the simple stress of the desiccation-rehydration process. The sequence is that of Hydrophilin YNL190W from Saccharomyces cerevisiae (strain ATCC 204508 / S288c) (Baker's yeast).